Reading from the N-terminus, the 527-residue chain is Cytochrome P450 monooxyhenase eriA (527 aa).

The helical transmembrane segment at Leu-17–Phe-37 threads the bilayer. 3 N-linked (GlcNAc...) asparagine glycosylation sites follow: Asn-77, Asn-274, and Asn-297. Cys-453 provides a ligand contact to heme.

This sequence belongs to the cytochrome P450 family. Heme is required as a cofactor.

The protein resides in the membrane. It catalyses the reaction cyathadiol + reduced [NADPH--hemoprotein reductase] + O2 = cyathatriol + oxidized [NADPH--hemoprotein reductase] + H2O + H(+). The protein operates within secondary metabolite biosynthesis. In terms of biological role, cytochrome P450 monooxygenase; part of the gene cluster that mediates the biosynthesis of erinacines, cyathane-xylosides that show unique biological activities, including leishmanicidal activity, stimulating activity for nerve growth-factor synthesis, and agonistic activity toward the kappa opioid receptor. Within the pathway, eriA catalyzes C-11 hydroxylation in the presence of the short chain dehydrogenase/reductase (SDR) eriH, which leads to the production of cyathatriol. The first step of the erinacines biosynthesis pathway is catalyzed by the geranylgeranyl diphosphate (GGPP) synthase eriE via conversion of farnesyl pyrophosphate and isopentyl pyrophosphate into geranylgeranyl pyrophosphate (GGPP). GGPP is then substrate of the diterpene cyclase eriG for the production of cyatha-3,12-diene. The cytochrome P450 monooxygenase eriI then hydroxylates cyatha-3,12-diene at C-14 of the seven-membered ring to produce erinacol, which is further hydroxylated at C-15 by the cytochrome P450 monooxygenase eriC to yield cyathadiol. The cytochrome P450 monooxygenase eriA then catalyzes C-11 hydroxylation in the presence of the short chain dehydrogenase/reductase (SDR) eriH, which leads to the production of cyathatriol. The acetyltransferase eriL converts cyathatriol into 11-O-acetyl-cyathatriol. The SDR eriH catalyzes further oxidation of 11-O-acetyl-cyathatriol into 1-O-acetylcyathin A3. Finally, the glycosyl transferase eriJ tranfers xylose from UDP-xylose onto C-14 of 11-O-acetyl-cyathatriol to form eracine Q. EriJ is also able to convert 11-O-acetyl-cyathatriol to eracine Q2 by using UDP-D-glucose as cosubstrate, but at a lower rate. The protein is Cytochrome P450 monooxyhenase eriA of Hericium erinaceus (Lion's mane mushroom).